The primary structure comprises 231 residues: NADH-ubiquinone oxidoreductase chain 4 (231 aa).

6 helical membrane-spanning segments follow: residues 1–21 (PIAG…YGII), 34–54 (MFLP…LTCL), 63–85 (IAYS…TPWG), 89–111 (AMAL…NTTY), 128–148 (ILPM…AVPP), and 156–176 (LLIM…LGLS).

It belongs to the complex I subunit 4 family.

It localises to the mitochondrion membrane. The catalysed reaction is a ubiquinone + NADH + 5 H(+)(in) = a ubiquinol + NAD(+) + 4 H(+)(out). In terms of biological role, core subunit of the mitochondrial membrane respiratory chain NADH dehydrogenase (Complex I) that is believed to belong to the minimal assembly required for catalysis. Complex I functions in the transfer of electrons from NADH to the respiratory chain. The immediate electron acceptor for the enzyme is believed to be ubiquinone. The polypeptide is NADH-ubiquinone oxidoreductase chain 4 (MT-ND4) (Agkistrodon contortrix contortrix (Southern copperhead)).